The chain runs to 270 residues: Oxidoreductase claK (270 aa).

The protein belongs to the avfA family.

Its pathway is pigment biosynthesis. In terms of biological role, oxidoreductase; part of the gene cluster that mediates the biosynthesis of the bianthraquinone cladofulvin, a conidial pigment not required for virulence but that plays a role in fitness and resistance to environmental stresses including UV light and low-temperature stress. The pathway begins with the synthesis of atrochrysone thioester by the polyketide synthase (PKS) claG. The atrochrysone carboxyl ACP thioesterase claF then breaks the thioester bond and releases the atrochrysone carboxylic acid from claG. This compound is decarboxylated by claH to yield emodin, which is further converted to chrysophanol hydroquinone by the reductase claC and the dehydratase claB. The cytochrome monooxygenase P450 claM then catalyzes the dimerization of nataloe-emodin to cladofulvin. This Passalora fulva (Tomato leaf mold) protein is Oxidoreductase claK.